A 416-amino-acid chain; its full sequence is Putative nucleoside permease NupX (416 aa).

Residues 1-2 (MD) are Periplasmic-facing. Residues 3-23 (VMRSVLGMVVLLTIAFLLSVN) traverse the membrane as a helical segment. Topologically, residues 24–31 (KKKISLRT) are cytoplasmic. Residues 32–52 (VGAALVLQVVIGGIMLWLPPG) traverse the membrane as a helical segment. At 53-95 (RWVAEKVAFGVHKVMAYSDAGSAFIFGSLVGPKMDTLFDGAGF) the chain is on the periplasmic side. Residues 96–118 (IFGFRVLPAIIFVTALVSILYYI) form a helical membrane-spanning segment. Over 119-172 (GVMGILIRILGGIFQKALNISKIESFVAVTTIFLGQNEIPAIVKPFIDRLNRNE) the chain is Cytoplasmic. Residues 173–193 (LFTAICSGMASIAGSTMIGYA) traverse the membrane as a helical segment. At 194-196 (ALG) the chain is on the periplasmic side. The helical transmembrane segment at 197–217 (VPVEYLLAASLMAIPGGILFA) threads the bilayer. The Cytoplasmic portion of the chain corresponds to 218 to 246 (RLLSPATESSQVSFNNLSFTETPPKSIIE). Residues 247-267 (AAATGAMTGLKIAAGVATVVM) traverse the membrane as a helical segment. The Periplasmic segment spans residues 268–352 (AFVAIIALIN…QTAGTLDAKT (85 aa)). The chain crosses the membrane as a helical span at residues 353–373 (VAIISFALCGFANFGSIGVVV). Residues 374–394 (GAFSAVAPHRAPEIAQLGLRA) are Cytoplasmic-facing. Residues 395 to 415 (LAAATLSNLMSATIAGFFIGL) form a helical membrane-spanning segment. Alanine 416 is a topological domain (periplasmic).

The protein belongs to the concentrative nucleoside transporter (CNT) (TC 2.A.41) family.

The protein localises to the cell inner membrane. This chain is Putative nucleoside permease NupX (nupX), found in Escherichia coli (strain K12).